Reading from the N-terminus, the 70-residue chain is MKKDIHPKYDFITANCSCGNAIKIRSTVGHDLNLDVCGQCHPFYTGKQRDVATGGRVDRFNKRFSIPGAK.

Positions 16, 18, 37, and 40 each coordinate Zn(2+).

Belongs to the bacterial ribosomal protein bL31 family. Type A subfamily. In terms of assembly, part of the 50S ribosomal subunit. Zn(2+) serves as cofactor.

In terms of biological role, binds the 23S rRNA. The protein is Large ribosomal subunit protein bL31 of Enterobacter sp. (strain 638).